The sequence spans 261 residues: MDEDRAVEAAASAWPGPSRRRRLIEFLLHASTRLDLRPVVKYTALSFFADRLLPSLRRKMGFCGARGGRAVTSWLLEPLRDSNLELFALVAVWIASKIHELKPLSVKSLKALGDRIIADQHFTCRDFANAELVFMEVVEYNIGSLNIAFTYLEELLVQFREISKIGDLLNMDVCMEILDILYETEDSSWLFNSPCQLAASALVTAYAISVPKQRWEFPILPWVTFTTSYDEEEIMKVVLTILMHVLKPDEMKGKGERDFNI.

This sequence belongs to the cyclin family.

This chain is Cyclin-J18-like, found in Oryza sativa subsp. japonica (Rice).